Here is a 302-residue protein sequence, read N- to C-terminus: Recombination-associated protein RdgC (302 aa).

It belongs to the RdgC family.

It localises to the cytoplasm. The protein resides in the nucleoid. Its function is as follows. May be involved in recombination. This Tolumonas auensis (strain DSM 9187 / NBRC 110442 / TA 4) protein is Recombination-associated protein RdgC.